Consider the following 77-residue polypeptide: U18-lycotoxin-Ls1a (77 aa).

An N-terminal signal peptide occupies residues 1–22; sequence MSPKMQALLLLLGLITLLVVHA. Positions 23–34 are excised as a propeptide; sequence EEELSENTESER. Cystine bridges form between Cys36/Cys51, Cys43/Cys56, Cys50/Cys67, and Cys58/Cys65.

The protein belongs to the neurotoxin 02 (plectoxin) family. Expressed by the venom gland.

It localises to the secreted. This is U18-lycotoxin-Ls1a from Lycosa singoriensis (Wolf spider).